Here is a 562-residue protein sequence, read N- to C-terminus: Dihydroxy-acid dehydratase (562 aa).

Asp-80 provides a ligand contact to Mg(2+). Residue Cys-121 coordinates [2Fe-2S] cluster. Positions 122 and 123 each coordinate Mg(2+). Lys-123 is subject to N6-carboxylysine. Residue Cys-194 coordinates [2Fe-2S] cluster. Mg(2+) is bound at residue Glu-446. The Proton acceptor role is filled by Ser-472.

The protein belongs to the IlvD/Edd family. Homodimer. [2Fe-2S] cluster serves as cofactor. It depends on Mg(2+) as a cofactor.

The catalysed reaction is (2R)-2,3-dihydroxy-3-methylbutanoate = 3-methyl-2-oxobutanoate + H2O. The enzyme catalyses (2R,3R)-2,3-dihydroxy-3-methylpentanoate = (S)-3-methyl-2-oxopentanoate + H2O. It participates in amino-acid biosynthesis; L-isoleucine biosynthesis; L-isoleucine from 2-oxobutanoate: step 3/4. Its pathway is amino-acid biosynthesis; L-valine biosynthesis; L-valine from pyruvate: step 3/4. Functionally, functions in the biosynthesis of branched-chain amino acids. Catalyzes the dehydration of (2R,3R)-2,3-dihydroxy-3-methylpentanoate (2,3-dihydroxy-3-methylvalerate) into 2-oxo-3-methylpentanoate (2-oxo-3-methylvalerate) and of (2R)-2,3-dihydroxy-3-methylbutanoate (2,3-dihydroxyisovalerate) into 2-oxo-3-methylbutanoate (2-oxoisovalerate), the penultimate precursor to L-isoleucine and L-valine, respectively. The protein is Dihydroxy-acid dehydratase of Staphylococcus aureus (strain MRSA252).